The following is a 351-amino-acid chain: Fe(3+) ions import ATP-binding protein FbpC (351 aa).

One can recognise an ABC transporter domain in the interval 7–241 (LTVKNLNKFF…PNHLETAKFM (235 aa)). An ATP-binding site is contributed by 39–46 (GASGCGKT).

The protein belongs to the ABC transporter superfamily. Fe(3+) ion importer (TC 3.A.1.10) family. As to quaternary structure, the complex is composed of two ATP-binding proteins (FbpC), two transmembrane proteins (FbpB) and a solute-binding protein (FbpA).

Its subcellular location is the cell inner membrane. The catalysed reaction is Fe(3+)(out) + ATP + H2O = Fe(3+)(in) + ADP + phosphate + H(+). Part of the ABC transporter complex FbpABC involved in Fe(3+) ions import. Responsible for energy coupling to the transport system. This is Fe(3+) ions import ATP-binding protein FbpC from Haemophilus influenzae (strain 86-028NP).